Here is a 1212-residue protein sequence, read N- to C-terminus: uncharacterized protein (1212 aa).

Over residues 1–31 the composition is skewed to polar residues; that stretch reads MASIQTKLVSQPQTQQPLQNGFFNNYQQNIY. Disordered stretches follow at residues 1–70, 119–169, 211–231, 248–374, 655–681, 935–957, and 973–1125; these read MASI…HLQQ, PQAQ…FGTN, SLNN…SNNN, INIG…NNNK, QQQP…TQQQ, NQNQ…CNNA, and QLQP…QQLQ. Low complexity-rich tracts occupy residues 48–70 and 119–163; these read PQQQ…HLQQ and PQAQ…NNNN. Over residues 256-275 the composition is skewed to low complexity; the sequence is NNSNTNNVNNINTNNTNNNN. 2 stretches are compositionally biased toward polar residues: residues 276-285 and 292-317; these read KSGSIDQFGS and YVNS…SHSP. Residues 322–340 are compositionally biased toward low complexity; the sequence is INSNININSNLQSPQNIQQ. Residues 341-351 are compositionally biased toward polar residues; that stretch reads TILSPNISPNH. Residues 352 to 373 show a composition bias toward low complexity; sequence NNNNNNNNNNNNNNNNNNNNNN. 2 stretches are compositionally biased toward low complexity: residues 998–1022 and 1037–1125; these read NSVN…NNNN and QNNN…QQLQ.

This is an uncharacterized protein from Dictyostelium discoideum (Social amoeba).